Consider the following 257-residue polypeptide: Thioredoxin-dependent peroxide reductase, mitochondrial (257 aa).

The transit peptide at 1–62 directs the protein to the mitochondrion; that stretch reads MAAAAGRLLW…FAFSTSSSFH (62 aa). Positions 64–222 constitute a Thioredoxin domain; it reads PAVTQHAPHF…PLRLVKAFQF (159 aa). Lys-84 carries the N6-succinyllysine modification. At Lys-92 the chain carries N6-acetyllysine; alternate. Lys-92 is subject to N6-succinyllysine; alternate. The Cysteine sulfenic acid (-SOH) intermediate role is filled by Cys-109. Thr-147 is modified (phosphothreonine).

Belongs to the peroxiredoxin family. AhpC/Prx1 subfamily. As to quaternary structure, homodimer; disulfide-linked, upon oxidation. 6 homodimers assemble to form a ring-like dodecamer. Interacts with NEK6. Interacts with LRRK2. Interacts with MAP3K13. Interacts with RPS6KC1 (via PX domain). In terms of processing, phosphorylated by LRRK2; phosphorylation reduces perodixase activity. The enzyme can be inactivated by further oxidation of the cysteine sulfenic acid (C(P)-SOH) to sulphinic acid (C(P)-SO2H) and sulphonic acid (C(P)-SO3H) instead of its condensation to a disulfide bond. Post-translationally, S-palmitoylated. In terms of tissue distribution, ubiquitous.

It is found in the mitochondrion. It localises to the cytoplasm. The protein resides in the early endosome. The catalysed reaction is a hydroperoxide + [thioredoxin]-dithiol = an alcohol + [thioredoxin]-disulfide + H2O. In terms of biological role, thiol-specific peroxidase that catalyzes the reduction of hydrogen peroxide and organic hydroperoxides to water and alcohols, respectively. Plays a role in cell protection against oxidative stress by detoxifying peroxides. Acts synergistically with MAP3K13 to regulate the activation of NF-kappa-B in the cytosol. Required for the maintenance of physical strength. The polypeptide is Thioredoxin-dependent peroxide reductase, mitochondrial (Prdx3) (Rattus norvegicus (Rat)).